Here is a 293-residue protein sequence, read N- to C-terminus: Insulin-like growth factor-binding protein 3 (293 aa).

The signal sequence occupies residues 1–27; sequence MQRARPALWAAALIALALLRGPPAARA. The 84-residue stretch at 36-119 folds into the IGFBP N-terminal domain; the sequence is PVVRCEPCDA…LDGRGICANA (84 aa). 6 cysteine pairs are disulfide-bonded: Cys-40–Cys-69, Cys-43–Cys-71, Cys-51–Cys-72, Cys-60–Cys-75, Cys-83–Cys-96, and Cys-90–Cys-116. N-linked (GlcNAc...) asparagine glycosylation is found at Asn-118 and Asn-138. Disordered regions lie at residues 132–166 and 178–213; these read APPA…PDSK and KKGH…TEYG. The residue at position 150 (Ser-150) is a Phosphoserine. A compositionally biased stretch (basic and acidic residues) spans 178–192; sequence KKGHAKDSQRYKVDY. Residues 193–204 show a composition bias toward polar residues; the sequence is ESQSTDTQNFSS. An N-linked (GlcNAc...) asparagine glycan is attached at Asn-201. The residue at position 203 (Ser-203) is a Phosphoserine. Residues 212-287 form the Thyroglobulin type-1 domain; that stretch reads YGPCRREMED…DVKGKGDVHC (76 aa). 3 cysteine pairs are disulfide-bonded: Cys-215-Cys-242, Cys-253-Cys-264, and Cys-266-Cys-287.

As to quaternary structure, interacts with XLKD1. Binds IGF2 more than IGF1. Forms a ternary complex of about 140 to 150 kDa with IGF1 or IGF2 and a 85 kDa glycoprotein (ALS). Interacts with humanin; humanin competes with importin KPNB1 for binding to IGFBP3, blocking IGFBP3 nuclear import and IGFBP3-mediated apoptosis. Interacts with TMEM219. Interacts with RXRA; this interaction modulates the transcriptional activity of RXRA. Interacts with LRP1; this interaction mediates cell growth inhibition independent of IGF1. In terms of processing, phosphorylated by FAM20C in the extracellular medium. Phosphorylated by CK2; resulting in decreased nuclear localization.

Its subcellular location is the secreted. The protein localises to the nucleus. Multifunctional protein that plays a critical role in regulating the availability of IGFs such as IGF1 and IGF2 to their receptors and thereby regulates IGF-mediated cellular processes including proliferation, differentiation, and apoptosis in a cell-type specific manner. Also exhibits IGF-independent antiproliferative and apoptotic effects mediated by its receptor TMEM219/IGFBP-3R. Inhibits the positive effect of humanin on insulin sensitivity. Promotes testicular germ cell apoptosis. Acts via LRP-1/alpha2M receptor, also known as TGF-beta type V receptor, to mediate cell growth inhibition independent of IGF1. Mechanistically, induces serine-specific dephosphorylation of IRS1 or IRS2 upon ligation to its receptor, leading to the inhibitory cascade. In the nucleus, interacts with transcription factors such as retinoid X receptor-alpha/RXRA to regulate transcriptional signaling and apoptosis. The polypeptide is Insulin-like growth factor-binding protein 3 (IGFBP3) (Sus scrofa (Pig)).